Reading from the N-terminus, the 255-residue chain is Aliphatic sulfonates import ATP-binding protein SsuB (255 aa).

In terms of domain architecture, ABC transporter spans isoleucine 7 to glutamine 231. Position 39–46 (glycine 39–serine 46) interacts with ATP.

Belongs to the ABC transporter superfamily. Aliphatic sulfonates importer (TC 3.A.1.17.2) family. The complex is composed of two ATP-binding proteins (SsuB), two transmembrane proteins (SsuC) and a solute-binding protein (SsuA).

Its subcellular location is the cell membrane. It catalyses the reaction ATP + H2O + aliphatic sulfonate-[sulfonate-binding protein]Side 1 = ADP + phosphate + aliphatic sulfonateSide 2 + [sulfonate-binding protein]Side 1.. Part of the ABC transporter complex SsuABC involved in aliphatic sulfonates import. Responsible for energy coupling to the transport system. Is also involved in taurine transport. The chain is Aliphatic sulfonates import ATP-binding protein SsuB from Bacillus subtilis (strain 168).